A 206-amino-acid chain; its full sequence is Ribonuclease HII (206 aa).

The region spanning 19-206 (ALIAGVDEVG…GPVKRALGIE (188 aa)) is the RNase H type-2 domain. Positions 25, 26, and 117 each coordinate a divalent metal cation.

It belongs to the RNase HII family. Mn(2+) is required as a cofactor. Mg(2+) serves as cofactor.

Its subcellular location is the cytoplasm. The enzyme catalyses Endonucleolytic cleavage to 5'-phosphomonoester.. In terms of biological role, endonuclease that specifically degrades the RNA of RNA-DNA hybrids. The protein is Ribonuclease HII of Vibrio cholerae serotype O1 (strain M66-2).